A 799-amino-acid polypeptide reads, in one-letter code: Histidine biosynthesis trifunctional protein (799 aa).

Residues 1-229 (MVLPILPLID…FIVEQENVGF (229 aa)) are phosphoribosyl-AMP cyclohydrolase. The phosphoribosyl-ATP pyrophosphohydrolase stretch occupies residues 230–312 (CHLETMSCFG…FYFALAKLVA (83 aa)). The interval 313–799 (NDVSLKDVEN…KLGLIPKDFQ (487 aa)) is histidinol dehydrogenase. Positions 618 and 621 each coordinate Zn(2+). Residues Glu-687 and His-688 contribute to the active site. Residues Asp-721 and His-780 each contribute to the Zn(2+) site.

It in the C-terminal section; belongs to the histidinol dehydrogenase family. Zn(2+) is required as a cofactor.

The enzyme catalyses 1-(5-phospho-beta-D-ribosyl)-5'-AMP + H2O = 1-(5-phospho-beta-D-ribosyl)-5-[(5-phospho-beta-D-ribosylamino)methylideneamino]imidazole-4-carboxamide. It carries out the reaction 1-(5-phospho-beta-D-ribosyl)-ATP + H2O = 1-(5-phospho-beta-D-ribosyl)-5'-AMP + diphosphate + H(+). The catalysed reaction is L-histidinol + 2 NAD(+) + H2O = L-histidine + 2 NADH + 3 H(+). The protein operates within amino-acid biosynthesis; L-histidine biosynthesis; L-histidine from 5-phospho-alpha-D-ribose 1-diphosphate: step 2/9. Its pathway is amino-acid biosynthesis; L-histidine biosynthesis; L-histidine from 5-phospho-alpha-D-ribose 1-diphosphate: step 3/9. It participates in amino-acid biosynthesis; L-histidine biosynthesis; L-histidine from 5-phospho-alpha-D-ribose 1-diphosphate: step 9/9. This Saccharomyces cerevisiae (strain ATCC 204508 / S288c) (Baker's yeast) protein is Histidine biosynthesis trifunctional protein.